Reading from the N-terminus, the 338-residue chain is D-erythrose-4-phosphate dehydrogenase (338 aa).

12-13 (RI) provides a ligand contact to NAD(+). Residues 154 to 156 (SCT), R200, 213 to 214 (TK), and R236 contribute to the substrate site. The active-site Nucleophile is the C155. N318 serves as a coordination point for NAD(+).

It belongs to the glyceraldehyde-3-phosphate dehydrogenase family. Epd subfamily. Homotetramer.

The protein resides in the cytoplasm. The enzyme catalyses D-erythrose 4-phosphate + NAD(+) + H2O = 4-phospho-D-erythronate + NADH + 2 H(+). It participates in cofactor biosynthesis; pyridoxine 5'-phosphate biosynthesis; pyridoxine 5'-phosphate from D-erythrose 4-phosphate: step 1/5. Functionally, catalyzes the NAD-dependent conversion of D-erythrose 4-phosphate to 4-phosphoerythronate. This is D-erythrose-4-phosphate dehydrogenase from Pectobacterium atrosepticum (strain SCRI 1043 / ATCC BAA-672) (Erwinia carotovora subsp. atroseptica).